We begin with the raw amino-acid sequence, 216 residues long: NADH dehydrogenase [ubiquinone] iron-sulfur protein 7, mitochondrial (216 aa).

The transit peptide at 1–37 directs the protein to the mitochondrion; it reads MAALAALRLLHPILAVRSGVGAALQVRGVHSSMAADS. 2 residues coordinate [4Fe-4S] cluster: Cys91 and Cys92. Arg114 is subject to Hydroxyarginine. The [4Fe-4S] cluster site is built by Cys156 and Cys186.

It belongs to the complex I 20 kDa subunit family. In terms of assembly, core subunit of respiratory chain NADH dehydrogenase (Complex I) which is composed of 45 different subunits. This is a component of the iron-sulfur (IP) fragment of the enzyme. [4Fe-4S] cluster serves as cofactor. Hydroxylated ar Arg-114 by NDUFAF5 early in the pathway of assembly of complex I, before the formation of the juncture between peripheral and membrane arms.

It is found in the mitochondrion inner membrane. The catalysed reaction is a ubiquinone + NADH + 5 H(+)(in) = a ubiquinol + NAD(+) + 4 H(+)(out). Functionally, core subunit of the mitochondrial membrane respiratory chain NADH dehydrogenase (Complex I) which catalyzes electron transfer from NADH through the respiratory chain, using ubiquinone as an electron acceptor. Essential for the catalytic activity of complex I. This Bos taurus (Bovine) protein is NADH dehydrogenase [ubiquinone] iron-sulfur protein 7, mitochondrial (NDUFS7).